We begin with the raw amino-acid sequence, 408 residues long: Dual-specificity RNA methyltransferase RlmN (408 aa).

Residue E120 is the Proton acceptor of the active site. The 250-residue stretch at 126 to 375 folds into the Radical SAM core domain; the sequence is EEGRGTLCIS…IRTPRGRDIL (250 aa). A disulfide bridge connects residues C133 and C378. [4Fe-4S] cluster is bound by residues C140, C144, and C147. S-adenosyl-L-methionine-binding positions include 204–205, S236, 258–260, and N335; these read GE and SLH. The active-site S-methylcysteine intermediate is C378.

It belongs to the radical SAM superfamily. RlmN family. [4Fe-4S] cluster serves as cofactor.

Its subcellular location is the cytoplasm. It catalyses the reaction adenosine(2503) in 23S rRNA + 2 reduced [2Fe-2S]-[ferredoxin] + 2 S-adenosyl-L-methionine = 2-methyladenosine(2503) in 23S rRNA + 5'-deoxyadenosine + L-methionine + 2 oxidized [2Fe-2S]-[ferredoxin] + S-adenosyl-L-homocysteine. The enzyme catalyses adenosine(37) in tRNA + 2 reduced [2Fe-2S]-[ferredoxin] + 2 S-adenosyl-L-methionine = 2-methyladenosine(37) in tRNA + 5'-deoxyadenosine + L-methionine + 2 oxidized [2Fe-2S]-[ferredoxin] + S-adenosyl-L-homocysteine. Its function is as follows. Specifically methylates position 2 of adenine 2503 in 23S rRNA and position 2 of adenine 37 in tRNAs. m2A2503 modification seems to play a crucial role in the proofreading step occurring at the peptidyl transferase center and thus would serve to optimize ribosomal fidelity. The sequence is that of Dual-specificity RNA methyltransferase RlmN from Rhizobium johnstonii (strain DSM 114642 / LMG 32736 / 3841) (Rhizobium leguminosarum bv. viciae).